The primary structure comprises 577 residues: Lysine-specific demethylase 7B (577 aa).

A PHD-type zinc finger spans residues 5–56 (QLYCVCRQPYDVSRFMIECDICKDWFHGSCVEVEEHYAVDIDVYHCPNCDVH). One can recognise a JmjC domain in the interval 198-354 (FSDTKMAELV…MQLRCYEMER (157 aa)). Thr-247 is a substrate binding site. Positions 250 and 252 each coordinate Fe cation. Position 267 (Lys-267) interacts with substrate. Fe cation is bound at residue His-322. The interval 460 to 513 (CPSTRSAHERGSHARKTARRLRGHHHHHHRHHHHHHHHHHHNHQHSDGPKAPSH) is disordered. Over residues 472–502 (HARKTARRLRGHHHHHHRHHHHHHHHHHHNH) the composition is skewed to basic residues.

The protein belongs to the JHDM1 histone demethylase family. JHDM1D subfamily. It depends on Fe(2+) as a cofactor. As to expression, predominantly expressed in brain.

It is found in the nucleus. Its function is as follows. Histone demethylase required for brain development. Specifically demethylates dimethylated 'Lys-9' and 'Lys-27' (H3K9me2 and H3K27me2, respectively) of histone H3 and monomethylated histone H4 'Lys-20' residue (H4K20Me1), thereby playing a central role in histone code. The sequence is that of Lysine-specific demethylase 7B (jhdm1db) from Danio rerio (Zebrafish).